The primary structure comprises 153 residues: 3-dehydroquinate dehydratase (153 aa).

Tyr26 (proton acceptor) is an active-site residue. The substrate site is built by Asn77, His83, and Asp90. Catalysis depends on His103, which acts as the Proton donor. Substrate contacts are provided by residues 104 to 105 (LS) and Arg114.

The protein belongs to the type-II 3-dehydroquinase family. In terms of assembly, homododecamer.

The catalysed reaction is 3-dehydroquinate = 3-dehydroshikimate + H2O. It functions in the pathway metabolic intermediate biosynthesis; chorismate biosynthesis; chorismate from D-erythrose 4-phosphate and phosphoenolpyruvate: step 3/7. Catalyzes a trans-dehydration via an enolate intermediate. The sequence is that of 3-dehydroquinate dehydratase from Colwellia psychrerythraea (strain 34H / ATCC BAA-681) (Vibrio psychroerythus).